The primary structure comprises 795 residues: Protocadherin beta-4 (795 aa).

An N-terminal signal peptide occupies residues 1-27 (MKKLGRIHPNRQVLAFILMVFLSQVRL). At 28–689 (EPIRYSVLEE…AQADSLTVYL (662 aa)) the chain is on the extracellular side. Cadherin domains follow at residues 34 to 132 (VLEE…SPIF), 137 to 241 (VLLK…APEF), 246 to 346 (YGVQ…PPEL), 351 to 450 (LTSS…APAF), and 455 to 560 (YTLF…SPFV). Asn183 carries an N-linked (GlcNAc...) asparagine glycan. Residues Asn417 and Asn435 are each glycosylated (N-linked (GlcNAc...) asparagine). N-linked (GlcNAc...) asparagine glycosylation is present at Asn566. One can recognise a Cadherin 6 domain in the interval 567-670 (GSAPCTELVP…LVDGFSQPYL (104 aa)). The helical transmembrane segment at 690 to 710 (VVALASVSSLFLFSVLLFVAV) threads the bilayer. Over 711-795 (RLCRRSRAAS…PKFRNSLVFS (85 aa)) the chain is Cytoplasmic.

It is found in the cell membrane. Potential calcium-dependent cell-adhesion protein. May be involved in the establishment and maintenance of specific neuronal connections in the brain. This Homo sapiens (Human) protein is Protocadherin beta-4 (PCDHB4).